Here is a 184-residue protein sequence, read N- to C-terminus: UPF0397 protein SAOUHSC_03020 (184 aa).

5 helical membrane-spanning segments follow: residues 11 to 31 (VVAI…VVIP), 44 to 64 (AFLA…TGLV), 77 to 97 (AWWS…WIGL), 116 to 136 (IGQI…LDIL), and 148 to 168 (QGVI…TILL).

The protein belongs to the UPF0397 family.

The protein resides in the cell membrane. This chain is UPF0397 protein SAOUHSC_03020, found in Staphylococcus aureus (strain NCTC 8325 / PS 47).